A 362-amino-acid chain; its full sequence is MLKLSCNVTDSKLQRSLLFFSHSYRSDPVNFIRRRIVSCSQTKKTGLVPLRAVVSADQGSVVQGLATLADQLRLGSLTEDGLSYKEKFVVRSYEVGSNKTATVETIANLLQEVGCNHAQSVGFSTDGFATTTTMRKLHLIWVTARMHIEIYKYPAWGDVVEIETWCQSEGRIGTRRDWILKDSVTGEVTGRATSKWVMMNQDTRRLQKVSDDVRDEYLVFCPQEPRLAFPEENNRSLKKIPKLEDPAQYSMIGLKPRRADLDMNQHVNNVTYIGWVLESIPQEIVDTHELQVITLDYRRECQQDDVVDSLTTTTSEIGGTNGSATSGTQGHNDSQFLHLLRLSGDGQEINRGTTLWRKKPSS.

The N-terminal 38 residues, 1–38 (MLKLSCNVTDSKLQRSLLFFSHSYRSDPVNFIRRRIVS), are a transit peptide targeting the chloroplast. Residues asparagine 264, histidine 266, and cysteine 301 contribute to the active site. Positions 312–331 (TTTSEIGGTNGSATSGTQGH) are disordered. The segment covering 315–331 (SEIGGTNGSATSGTQGH) has biased composition (polar residues).

It belongs to the acyl-ACP thioesterase family.

It is found in the plastid. The protein resides in the chloroplast. It catalyses the reaction (9Z)-octadecenoyl-[ACP] + H2O = (9Z)-octadecenoate + holo-[ACP] + H(+). In terms of biological role, plays an essential role in chain termination during de novo fatty acid synthesis. Possesses high thioesterase activity for oleoyl-ACP versus other acyl-ACPs. Substrate preference is 18:1 &gt; 18:0 &gt; 16:1. The polypeptide is Oleoyl-acyl carrier protein thioesterase 1, chloroplastic (FATA) (Arabidopsis thaliana (Mouse-ear cress)).